Consider the following 135-residue polypeptide: BolA-like protein 1 (135 aa).

A Phosphoserine modification is found at S81. Residues 114–135 (WKENPQLDTSPACLGGSKKSRN) form a disordered region.

This sequence belongs to the BolA/IbaG family. In terms of assembly, interacts with GLRX5.

It is found in the mitochondrion. Its function is as follows. Acts as a mitochondrial iron-sulfur (Fe-S) cluster assembly factor that facilitates (Fe-S) cluster insertion into a subset of mitochondrial proteins. Probably acts together with the monothiol glutaredoxin GLRX5. May protect cells against oxidative stress. The chain is BolA-like protein 1 (BOLA1) from Bos taurus (Bovine).